The primary structure comprises 409 residues: Outer membrane protein YopM (409 aa).

LRR repeat units lie at residues 72–91 (QAHE…ELPP), 92–113 (HLES…PQSL), 114–131 (KSLL…DLPP), 132–153 (LLEY…QNSS), 154–173 (FLKI…DLPP), 174–195 (SLEF…QNLP), 196–215 (FLTA…DLPL), 216–237 (SLES…QNLP), 238–257 (FLTT…DLPP), 258–279 (SLEA…PQSL), 280–297 (TFLD…ELPP), 298–317 (NLYY…DLPP), 318–339 (SLEE…PPRL), 340–357 (ERLI…ELPQ), and 358–379 (NLKQ…PESV). Ca(2+) contacts are provided by Asn-246 and Asp-266. Ca(2+)-binding residues include Asn-307, Glu-308, and Asn-326.

This sequence belongs to the LRR-containing bacterial E3 ligase family. In terms of assembly, homotetramer forming a hollow cylinder with an inner diameter of approximately 35 angstroms.

It is found in the cell outer membrane. It localises to the secreted. Its function is as follows. Effector proteins function to alter host cell physiology and promote bacterial survival in host tissues. This is Outer membrane protein YopM (yopM) from Yersinia pestis.